Consider the following 586-residue polypeptide: A-type ATP synthase subunit A (586 aa).

Gly-232–Thr-239 is an ATP binding site.

Belongs to the ATPase alpha/beta chains family. Has multiple subunits with at least A(3), B(3), C, D, E, F, H, I and proteolipid K(x).

It localises to the cell membrane. It catalyses the reaction ATP + H2O + 4 H(+)(in) = ADP + phosphate + 5 H(+)(out). Functionally, component of the A-type ATP synthase that produces ATP from ADP in the presence of a proton gradient across the membrane. The A chain is the catalytic subunit. The polypeptide is A-type ATP synthase subunit A (Methanococcus maripaludis (strain C7 / ATCC BAA-1331)).